We begin with the raw amino-acid sequence, 1251 residues long: Probable transcription factor TDA9 (1251 aa).

2 C2H2-type zinc fingers span residues 61 to 83 and 89 to 112; these read FLCHICTRGFVRQEHLKRHQRAH and FLCVFCGRCFARRDLVLRHQHKLH. Disordered regions lie at residues 160-227 and 398-428; these read VQLK…KSKR and NHSHPDSRHNNSSSGINYSNNKNNNESIEKS. The segment covering 164 to 173 has biased composition (basic residues); the sequence is KAAKEKKNGK. Over residues 183–202 the composition is skewed to polar residues; the sequence is YGANNHSTDVSPSVGNSSTP. Residues 407 to 428 are compositionally biased toward low complexity; it reads NNSSSGINYSNNKNNNESIEKS. Phosphoserine is present on residues serine 527 and serine 603. Residues 617–634 show a composition bias toward low complexity; the sequence is SLTPSLTTQTATTQSGPG. Residues 617 to 636 form a disordered region; sequence SLTPSLTTQTATTQSGPGWT.

Belongs to the RSF2/TDA9 family.

The protein localises to the nucleus. Functionally, DNA-binding protein that acts probably as a transcription factor. This is Probable transcription factor TDA9 (TDA9) from Saccharomyces cerevisiae (strain ATCC 204508 / S288c) (Baker's yeast).